A 202-amino-acid chain; its full sequence is dTTP/UTP pyrophosphatase (202 aa).

Asp80 functions as the Proton acceptor in the catalytic mechanism.

Belongs to the Maf family. YhdE subfamily. A divalent metal cation is required as a cofactor.

It is found in the cytoplasm. It catalyses the reaction dTTP + H2O = dTMP + diphosphate + H(+). The catalysed reaction is UTP + H2O = UMP + diphosphate + H(+). Its function is as follows. Nucleoside triphosphate pyrophosphatase that hydrolyzes dTTP and UTP. May have a dual role in cell division arrest and in preventing the incorporation of modified nucleotides into cellular nucleic acids. The polypeptide is dTTP/UTP pyrophosphatase (Alkalilimnicola ehrlichii (strain ATCC BAA-1101 / DSM 17681 / MLHE-1)).